The chain runs to 196 residues: Imidazoleglycerol-phosphate dehydratase (196 aa).

Belongs to the imidazoleglycerol-phosphate dehydratase family.

The protein resides in the cytoplasm. It catalyses the reaction D-erythro-1-(imidazol-4-yl)glycerol 3-phosphate = 3-(imidazol-4-yl)-2-oxopropyl phosphate + H2O. It participates in amino-acid biosynthesis; L-histidine biosynthesis; L-histidine from 5-phospho-alpha-D-ribose 1-diphosphate: step 6/9. The polypeptide is Imidazoleglycerol-phosphate dehydratase (Akkermansia muciniphila (strain ATCC BAA-835 / DSM 22959 / JCM 33894 / BCRC 81048 / CCUG 64013 / CIP 107961 / Muc)).